Here is a 465-residue protein sequence, read N- to C-terminus: 3-isopropylmalate dehydratase large subunit (465 aa).

Cys346, Cys406, and Cys409 together coordinate [4Fe-4S] cluster.

It belongs to the aconitase/IPM isomerase family. LeuC type 1 subfamily. Heterodimer of LeuC and LeuD. The cofactor is [4Fe-4S] cluster.

The catalysed reaction is (2R,3S)-3-isopropylmalate = (2S)-2-isopropylmalate. The protein operates within amino-acid biosynthesis; L-leucine biosynthesis; L-leucine from 3-methyl-2-oxobutanoate: step 2/4. In terms of biological role, catalyzes the isomerization between 2-isopropylmalate and 3-isopropylmalate, via the formation of 2-isopropylmaleate. The protein is 3-isopropylmalate dehydratase large subunit of Leptospira interrogans serogroup Icterohaemorrhagiae serovar copenhageni (strain Fiocruz L1-130).